The following is a 109-amino-acid chain: MPLQPPPDHTWAVRIIALGLAVTALIFTSTRDTSRHVGDPSHSLPFGGHYRDGSKVIHYNSPRSSKPSNHTPYLLFAPIGIILLIHALHRLGNSAHICRCTHCMPHSQT.

Topologically, residues 1 to 9 are cytoplasmic; that stretch reads MPLQPPPDH. The chain crosses the membrane as a helical span at residues 10–30; the sequence is TWAVRIIALGLAVTALIFTST. Over 31–71 the chain is Lumenal; it reads RDTSRHVGDPSHSLPFGGHYRDGSKVIHYNSPRSSKPSNHT. Residues 72 to 92 traverse the membrane as a helical segment; that stretch reads PYLLFAPIGIILLIHALHRLG. Topologically, residues 93-109 are cytoplasmic; sequence NSAHICRCTHCMPHSQT.

The protein belongs to the Tymovirales TGBp2 protein family.

It localises to the host endoplasmic reticulum membrane. Functionally, plays a role in viral cell-to-cell propagation, by facilitating genome transport to neighboring plant cells through plasmosdesmata,. This is Movement protein TGB2 from Citrus (ICRSV).